An 888-amino-acid chain; its full sequence is Valine--tRNA ligase (888 aa).

The short motif at 43–53 is the 'HIGH' region element; it reads PNVTGTLHLGH. The 'KMSKS' region motif lies at 538–542; that stretch reads KMSKS. Lys-541 contacts ATP. Residues 821 to 888 adopt a coiled-coil conformation; the sequence is LIDLDAERAR…RLKAALGRLA (68 aa).

Belongs to the class-I aminoacyl-tRNA synthetase family. ValS type 1 subfamily. Monomer.

The protein resides in the cytoplasm. The enzyme catalyses tRNA(Val) + L-valine + ATP = L-valyl-tRNA(Val) + AMP + diphosphate. In terms of biological role, catalyzes the attachment of valine to tRNA(Val). As ValRS can inadvertently accommodate and process structurally similar amino acids such as threonine, to avoid such errors, it has a 'posttransfer' editing activity that hydrolyzes mischarged Thr-tRNA(Val) in a tRNA-dependent manner. The chain is Valine--tRNA ligase from Gluconobacter oxydans (strain 621H) (Gluconobacter suboxydans).